Here is a 158-residue protein sequence, read N- to C-terminus: Endoribonuclease YbeY (158 aa).

The Zn(2+) site is built by His-124, His-128, and His-134.

This sequence belongs to the endoribonuclease YbeY family. Requires Zn(2+) as cofactor.

Its subcellular location is the cytoplasm. Its function is as follows. Single strand-specific metallo-endoribonuclease involved in late-stage 70S ribosome quality control and in maturation of the 3' terminus of the 16S rRNA. The chain is Endoribonuclease YbeY from Caldanaerobacter subterraneus subsp. tengcongensis (strain DSM 15242 / JCM 11007 / NBRC 100824 / MB4) (Thermoanaerobacter tengcongensis).